The primary structure comprises 992 residues: P3N-PIPO polyprotein (992 aa).

Residues 168–308 enclose the Peptidase S30 domain; the sequence is TSQCRKPTYV…VENMEDIQHY (141 aa). Active-site for P1 proteinase activity residues include histidine 221, glutamate 230, and serine 262. Positions 361–364 match the Involved in interaction with stylet and aphid transmission motif; sequence KLSC. Residues 617-619 carry the Involved in virions binding and aphid transmission motif; that stretch reads PTK. The Peptidase C6 domain maps to 643 to 765; it reads MYIAKEGFCY…QSEMKFYRVG (123 aa). Active-site for helper component proteinase activity residues include cysteine 651 and histidine 724.

Belongs to the potyviridae P3N-PIPO polyprotein family. Interacts (via PIPO domain) with host PCaP1 protein; this interaction may help to anchor the movement complex to the plasma membrane from which the complex could move to the plasmodesmata. In terms of processing, potyviral RNA is expressed as two polyproteins which undergo post-translational proteolytic processing. Genome polyprotein is processed by NIa-pro, P1 and HC-pro proteinases resulting in the production of at least ten individual proteins. P3N-PIPO is cleaved by P1 and HC-pro proteinases resulting in the production of three individual proteins. The P1 proteinase and the HC-pro cleave only their respective C-termini autocatalytically.

It localises to the host cell junction. The protein resides in the host plasmodesma. The catalysed reaction is Hydrolyzes a Gly-|-Gly bond at its own C-terminus, commonly in the sequence -Tyr-Xaa-Val-Gly-|-Gly, in the processing of the potyviral polyprotein.. Functionally, required for aphid transmission and also has proteolytic activity. Only cleaves a Gly-Gly dipeptide at its own C-terminus. Interacts with virions and aphid stylets. Acts as a suppressor of RNA-mediated gene silencing, also known as post-transcriptional gene silencing (PTGS), a mechanism of plant viral defense that limits the accumulation of viral RNAs. May have RNA-binding activity. Allows efficient cell to cell propagation, by bypassing the host cell wall barrier. Transports viral genome to neighboring plant cells directly through plasmosdesmata, without any budding. In Glycine max (Soybean), this protein is P3N-PIPO polyprotein.